Consider the following 352-residue polypeptide: CRISPR-associated endonuclease Cas1 1 (352 aa).

Mn(2+) is bound by residues Glu-207, His-274, and Glu-289.

It belongs to the CRISPR-associated endonuclease Cas1 family. Homodimer, forms a heterotetramer with a Cas2 homodimer. The cofactor is Mg(2+). Mn(2+) is required as a cofactor.

CRISPR (clustered regularly interspaced short palindromic repeat), is an adaptive immune system that provides protection against mobile genetic elements (viruses, transposable elements and conjugative plasmids). CRISPR clusters contain spacers, sequences complementary to antecedent mobile elements, and target invading nucleic acids. CRISPR clusters are transcribed and processed into CRISPR RNA (crRNA). Acts as a dsDNA endonuclease. Involved in the integration of spacer DNA into the CRISPR cassette. The protein is CRISPR-associated endonuclease Cas1 1 of Saccharolobus solfataricus (strain ATCC 35092 / DSM 1617 / JCM 11322 / P2) (Sulfolobus solfataricus).